The primary structure comprises 318 residues: Acetyl-coenzyme A carboxylase carboxyl transferase subunit alpha (318 aa).

The CoA carboxyltransferase C-terminal domain maps to 39–292; that stretch reads LTDKSEKQLR…GDSIAAELPD (254 aa).

The protein belongs to the AccA family. In terms of assembly, acetyl-CoA carboxylase is a heterohexamer composed of biotin carboxyl carrier protein (AccB), biotin carboxylase (AccC) and two subunits each of ACCase subunit alpha (AccA) and ACCase subunit beta (AccD).

Its subcellular location is the cytoplasm. The catalysed reaction is N(6)-carboxybiotinyl-L-lysyl-[protein] + acetyl-CoA = N(6)-biotinyl-L-lysyl-[protein] + malonyl-CoA. It participates in lipid metabolism; malonyl-CoA biosynthesis; malonyl-CoA from acetyl-CoA: step 1/1. In terms of biological role, component of the acetyl coenzyme A carboxylase (ACC) complex. First, biotin carboxylase catalyzes the carboxylation of biotin on its carrier protein (BCCP) and then the CO(2) group is transferred by the carboxyltransferase to acetyl-CoA to form malonyl-CoA. This Gluconacetobacter diazotrophicus (strain ATCC 49037 / DSM 5601 / CCUG 37298 / CIP 103539 / LMG 7603 / PAl5) protein is Acetyl-coenzyme A carboxylase carboxyl transferase subunit alpha.